The primary structure comprises 253 residues: Probable U3 small nucleolar RNA-associated protein 11 (253 aa).

A disordered region spans residues 1–26 (MAAAFRKAAKSRQREHRERSQPGFRK). Glycyl lysine isopeptide (Lys-Gly) (interchain with G-Cter in SUMO2) cross-links involve residues lysine 74, lysine 83, and lysine 86. Threonine 90 carries the phosphothreonine modification. Residues lysine 103, lysine 120, lysine 143, lysine 144, lysine 180, lysine 211, lysine 218, lysine 235, and lysine 236 each participate in a glycyl lysine isopeptide (Lys-Gly) (interchain with G-Cter in SUMO2) cross-link. Position 241 is a phosphoserine (serine 241). Lysine 246 participates in a covalent cross-link: Glycyl lysine isopeptide (Lys-Gly) (interchain with G-Cter in SUMO2).

Belongs to the UTP11 family. In terms of assembly, part of the small subunit (SSU) processome, composed of more than 70 proteins and the RNA chaperone small nucleolar RNA (snoRNA) U3.

It localises to the nucleus. The protein localises to the nucleolus. Part of the small subunit (SSU) processome, first precursor of the small eukaryotic ribosomal subunit. During the assembly of the SSU processome in the nucleolus, many ribosome biogenesis factors, an RNA chaperone and ribosomal proteins associate with the nascent pre-rRNA and work in concert to generate RNA folding, modifications, rearrangements and cleavage as well as targeted degradation of pre-ribosomal RNA by the RNA exosome. Involved in nucleolar processing of pre-18S ribosomal RNA. This Homo sapiens (Human) protein is Probable U3 small nucleolar RNA-associated protein 11.